Reading from the N-terminus, the 941-residue chain is MSIPTASLSPALAALIERAVARVRQSLPAWQVWPGGDFDRQLAQVALASDFALDTLARQPALLQHLAHPDPPPLPLPQLDPAQPQLWPAQLRRYRSAESTRLVWRDVLGLDSVEATLAGATRLAEHCMQCGLQALEQQFATRHGKVIADDGSVQRLVVFGLGKLGGGELNFSSDVDLVYAYPQGGQSDGARSLAAEEYFARLGQQLARLLDEATAEGFSHRVDLRLRPFGTAGRVALSFAGMDQYFQREGRDWERYAWLKARAVAGAIDAGEAWLETLRPFVYRRYLDFTALDGLREMKAAITAEVARHDCLDDIKRGPGGIREIEFLAQSLQLIRGGREPSLRERRLLPALRALVTAGQIDQENGQALTTAYRFLRRLENRLQMLRDAQTHALPQAPLDRERIALGLGYAEWATLLDALAPQRARVTAEFAELLAPRVRATAPDTLADYWRALPAGDAARLAGMGLSDPGGAHQALADFAHSSGVRGLSDSARARLDRVMPALLHAATRASQPDAAVPRMLGLLQATLRRTSYLSLLDEQPSALARLVDVLSRSALLAERLAAYPLLLDELLDTRISGPLPDRAALHAACADIVHIDDTEAALRELNERRLARSFRIALATLDGRQQAVESTRQLAWLAEAVVQTVLHLARTEMVAAHGYVSGGSFAIIGYGSLGGMELGFGSDLDLVFLYDHPPEVDASDGKRPLEAGRWFARLAQKVMALLAAETGAGRLYDIDVRLRPDGGKAALVSSLASYREYQRERAWTWEHQALVRARAVAGDAVLCDAFAQVRRYTLMRVRDTAQLHEDVRKMRARMRTELDRSDAGRLDLKQGAGGLVDLEFVLQAGVLGLAAQQPQLLDVCDTPALIDALVQVHWLPDDSAASLHQAHATLVDAGLSCTLDRRPRLIAPTPAIQQARGTIFNAARVQRLTFPLGKDEAAL.

Residues 1–437 (MSIPTASLSP…TAEFAELLAP (437 aa)) form an adenylyl removase region. The segment at 444-941 (PDTLADYWRA…FPLGKDEAAL (498 aa)) is adenylyl transferase.

It belongs to the GlnE family. Requires Mg(2+) as cofactor.

The enzyme catalyses [glutamine synthetase]-O(4)-(5'-adenylyl)-L-tyrosine + phosphate = [glutamine synthetase]-L-tyrosine + ADP. It catalyses the reaction [glutamine synthetase]-L-tyrosine + ATP = [glutamine synthetase]-O(4)-(5'-adenylyl)-L-tyrosine + diphosphate. Its function is as follows. Involved in the regulation of glutamine synthetase GlnA, a key enzyme in the process to assimilate ammonia. When cellular nitrogen levels are high, the C-terminal adenylyl transferase (AT) inactivates GlnA by covalent transfer of an adenylyl group from ATP to specific tyrosine residue of GlnA, thus reducing its activity. Conversely, when nitrogen levels are low, the N-terminal adenylyl removase (AR) activates GlnA by removing the adenylyl group by phosphorolysis, increasing its activity. The regulatory region of GlnE binds the signal transduction protein PII (GlnB) which indicates the nitrogen status of the cell. This Xanthomonas oryzae pv. oryzae (strain MAFF 311018) protein is Bifunctional glutamine synthetase adenylyltransferase/adenylyl-removing enzyme.